A 1391-amino-acid chain; its full sequence is Leucine-rich PPR motif-containing protein, mitochondrial (1391 aa).

A mitochondrion-targeting transit peptide spans 1-42 (MSALLAGARFLLRPGLRALPAPCVRLSPGQGRYLNNTPGHFA). PPR repeat units lie at residues 110-144 (LLRSCGSLLPELQMSERTEMAHRIWEKLQELGAVF), 145-179 (DVSHYNALLKVYLQNEHKFSPTEYLAKMEAANVQP), 180-214 (NRVTYQRLIAAYCNEGDIEGASKILGFMKNKDLPI), 215-249 (TEAVFNTLVTGHARAGDMENAKNILSVMRSAGIEP), 250-284 (GPETYVALLTAYAEKGDINNIKQTLENVEKNEGSL), 389-425 (NLHSAPLQFALYCSLDAKKADLALELMKMMKQEGMPV), 704-738 (AIGTYAALIQLCCRHDNPDEALNLKQELNRKDSSA), 741-775 (DTSKYLALVKVFGKNGRIADAINVLKEMKEKDVPL), 779-813 (TTTSFFHILNAAALRGDAETVDKIHESIVTLGLAK), 815-850 (TSNLCSPLVSVHLEKGDLPAAMETLFTCSKKYNCMP), 948-982 (RDDMYYYLLKLCKENDDWKKADSAWTKIQEENVIP), 1028-1062 (PESSFQKRVQVLSKKNRAKDAYEAFMEGENNGTAM), 1063-1093 (SASAYSSLIRSMLSEGMLEEAKKVLNTAENH), 1100-1134 (NDAASSLLIITQVRRDYLKDALASLKAMLEGDKVP), and 1310-1344 (RETAYSYLMKCYATDKDATAATALYEKMKSESVSP). An RNA-binding region spans residues 1118-1387 (KDALASLKAM…KLKKDKADSY (270 aa)).

The protein resides in the mitochondrion. The protein localises to the nucleus. Its function is as follows. May play a role in RNA metabolism in both nuclei and mitochondria. May bind mature mRNA in the nucleus outer membrane. In mitochondria binds to poly(A) mRNA. May be involved in transcription regulation. Binds single-stranded DNA. The chain is Leucine-rich PPR motif-containing protein, mitochondrial (lrpprc) from Xenopus tropicalis (Western clawed frog).